A 348-amino-acid polypeptide reads, in one-letter code: Protein DMR6-LIKE OXYGENASE 2 (348 aa).

The Fe2OG dioxygenase domain maps to 194-294 (KHGQHMAINY…RISIPTFYCP (101 aa)). Positions 219, 221, and 275 each coordinate Fe cation. 2-oxoglutarate is bound at residue Arg-285.

This sequence belongs to the iron/ascorbate-dependent oxidoreductase family. Fe(2+) serves as cofactor.

It catalyses the reaction salicylate + NADH + O2 + H(+) = 2,3-dihydroxybenzoate + NAD(+) + H2O. In terms of biological role, converts salicylic acid (SA) to 2,3-dihydroxybenzoic acid (2,3-DHBA). Negative regulator of defense against Hyaloperonospora arabidopsidis. Functionally, (Microbial infection) Confers susceptibility to the downy mildew pathogen Hyaloperonospora arabidopsidis. The protein is Protein DMR6-LIKE OXYGENASE 2 of Arabidopsis thaliana (Mouse-ear cress).